A 446-amino-acid polypeptide reads, in one-letter code: ATP-dependent protease ATPase subunit HslU (446 aa).

ATP-binding positions include Val18, 60–65, Asp259, Glu324, and Arg396; that span reads GVGKTE.

It belongs to the ClpX chaperone family. HslU subfamily. As to quaternary structure, a double ring-shaped homohexamer of HslV is capped on each side by a ring-shaped HslU homohexamer. The assembly of the HslU/HslV complex is dependent on binding of ATP.

It localises to the cytoplasm. Its function is as follows. ATPase subunit of a proteasome-like degradation complex; this subunit has chaperone activity. The binding of ATP and its subsequent hydrolysis by HslU are essential for unfolding of protein substrates subsequently hydrolyzed by HslV. HslU recognizes the N-terminal part of its protein substrates and unfolds these before they are guided to HslV for hydrolysis. The sequence is that of ATP-dependent protease ATPase subunit HslU from Acidovorax ebreus (strain TPSY) (Diaphorobacter sp. (strain TPSY)).